A 429-amino-acid chain; its full sequence is Histidine--tRNA ligase (429 aa).

This sequence belongs to the class-II aminoacyl-tRNA synthetase family. As to quaternary structure, homodimer.

The protein resides in the cytoplasm. It carries out the reaction tRNA(His) + L-histidine + ATP = L-histidyl-tRNA(His) + AMP + diphosphate + H(+). This Streptococcus pneumoniae (strain P1031) protein is Histidine--tRNA ligase.